We begin with the raw amino-acid sequence, 156 residues long: Histidine-containing phosphotransfer protein 2 (156 aa).

At Met1 the chain carries N-acetylmethionine. The region spanning 40 to 147 (SPDFVSEVLS…NLEKQIIQAG (108 aa)) is the HPt domain. Residue His82 is modified to Phosphohistidine.

As to quaternary structure, interacts with the B-type response regulators ARR1, ARR2 and ARR10. Binds to AHK1, AHK2, AHK3, AHK4, AHK5, ETR1 and CKI1. In terms of processing, two-component system major event consists of a His-to-Asp phosphorelay between a sensor histidine kinase (HK) and a response regulator (RR). In plants, the His-to-Asp phosphorelay involves an additional intermediate named Histidine-containing phosphotransfer protein (HPt). This multistep phosphorelay consists of a His-Asp-His-Asp sequential transfer of a phosphate group between first a His and an Asp of the HK protein, followed by the transfer to a conserved His of the HPt protein and finally the transfer to an Asp in the receiver domain of the RR protein. Strongly expressed in flowers and roots. Detected also in leaves, siliques and stems.

It localises to the cytoplasm. The protein localises to the cytosol. Its subcellular location is the nucleus. In terms of biological role, functions as a two-component phosphorelay mediators between cytokinin sensor histidine kinases and response regulator (B-type ARRs). Plays an important role in propagating cytokinin signal transduction through the multistep His-to-Asp phosphorelay. The protein is Histidine-containing phosphotransfer protein 2 (AHP2) of Arabidopsis thaliana (Mouse-ear cress).